The sequence spans 90 residues: Accessory gland-specific peptide 26Ab (90 aa).

An N-terminal signal peptide occupies residues 1–21 (MNYFAVLCIFSCICLWQFSDA).

As to expression, main cells of the accessory glands of males.

The protein resides in the secreted. It is found in the extracellular space. Functionally, this protein is transferred from male to female during mating and may affect egglaying and behavior after mating. This chain is Accessory gland-specific peptide 26Ab (Acp26Ab), found in Drosophila mauritiana (Fruit fly).